A 427-amino-acid chain; its full sequence is 3-phosphoshikimate 1-carboxyvinyltransferase (427 aa).

Residues lysine 20, serine 21, and arginine 25 each coordinate 3-phosphoshikimate. Lysine 20 serves as a coordination point for phosphoenolpyruvate. Residues glycine 92 and arginine 120 each coordinate phosphoenolpyruvate. 3-phosphoshikimate contacts are provided by serine 166, glutamine 168, aspartate 312, and lysine 339. Glutamine 168 lines the phosphoenolpyruvate pocket. Aspartate 312 acts as the Proton acceptor in catalysis. Arginine 343 and arginine 385 together coordinate phosphoenolpyruvate.

This sequence belongs to the EPSP synthase family. Monomer.

Its subcellular location is the cytoplasm. It catalyses the reaction 3-phosphoshikimate + phosphoenolpyruvate = 5-O-(1-carboxyvinyl)-3-phosphoshikimate + phosphate. The protein operates within metabolic intermediate biosynthesis; chorismate biosynthesis; chorismate from D-erythrose 4-phosphate and phosphoenolpyruvate: step 6/7. Its function is as follows. Catalyzes the transfer of the enolpyruvyl moiety of phosphoenolpyruvate (PEP) to the 5-hydroxyl of shikimate-3-phosphate (S3P) to produce enolpyruvyl shikimate-3-phosphate and inorganic phosphate. This is 3-phosphoshikimate 1-carboxyvinyltransferase from Streptococcus pyogenes serotype M28 (strain MGAS6180).